Reading from the N-terminus, the 229-residue chain is Ribonuclease T (229 aa).

Positions Val-23–Phe-197 constitute an Exonuclease domain. Residues Asp-26, Glu-28, His-184, and Asp-189 each contribute to the Mg(2+) site. His-184 acts as the Proton donor/acceptor in catalysis.

Belongs to the RNase T family. In terms of assembly, homodimer. Mg(2+) serves as cofactor.

In terms of biological role, trims short 3' overhangs of a variety of RNA species, leaving a one or two nucleotide 3' overhang. Responsible for the end-turnover of tRNA: specifically removes the terminal AMP residue from uncharged tRNA (tRNA-C-C-A). Also appears to be involved in tRNA biosynthesis. The sequence is that of Ribonuclease T from Haemophilus influenzae (strain PittEE).